The following is a 150-amino-acid chain: Ribosome maturation factor RimP (150 aa).

This sequence belongs to the RimP family.

It is found in the cytoplasm. Required for maturation of 30S ribosomal subunits. The protein is Ribosome maturation factor RimP of Methylococcus capsulatus (strain ATCC 33009 / NCIMB 11132 / Bath).